The following is a 342-amino-acid chain: Ribosomal RNA small subunit methyltransferase C (342 aa).

The protein belongs to the methyltransferase superfamily. RsmC family. As to quaternary structure, monomer.

It is found in the cytoplasm. It catalyses the reaction guanosine(1207) in 16S rRNA + S-adenosyl-L-methionine = N(2)-methylguanosine(1207) in 16S rRNA + S-adenosyl-L-homocysteine + H(+). Its function is as follows. Specifically methylates the guanine in position 1207 of 16S rRNA in the 30S particle. In Shewanella sp. (strain MR-7), this protein is Ribosomal RNA small subunit methyltransferase C.